A 169-amino-acid chain; its full sequence is Ribonuclease H (169 aa).

The region spanning 3 to 159 (AHAALTLYTD…CDRLATDAAR (157 aa)) is the RNase H type-1 domain. Mg(2+) is bound by residues aspartate 12, glutamate 63, aspartate 87, and aspartate 151.

It belongs to the RNase H family. Monomer. Requires Mg(2+) as cofactor.

It is found in the cytoplasm. The enzyme catalyses Endonucleolytic cleavage to 5'-phosphomonoester.. Endonuclease that specifically degrades the RNA of RNA-DNA hybrids. The chain is Ribonuclease H from Treponema pallidum subsp. pallidum (strain SS14).